The sequence spans 545 residues: CTP synthase (545 aa).

The tract at residues 1 to 265 (MSRFIFVTGG…DAIVVEKFGL (265 aa)) is amidoligase domain. S13 serves as a coordination point for CTP. S13 contacts UTP. 14–19 (SLGKGI) serves as a coordination point for ATP. Residue Y54 participates in L-glutamine binding. D71 is an ATP binding site. Mg(2+) is bound by residues D71 and E139. Residues 146 to 148 (DIE), 186 to 191 (KTKPTQ), and K222 contribute to the CTP site. UTP-binding positions include 186 to 191 (KTKPTQ) and K222. Residues 290 to 541 (TVGMVGKYIE…VAAALAEQKA (252 aa)) enclose the Glutamine amidotransferase type-1 domain. G351 serves as a coordination point for L-glutamine. The Nucleophile; for glutamine hydrolysis role is filled by C378. L-glutamine is bound by residues 379 to 382 (LGMQ), E402, and R469. Residues H514 and E516 contribute to the active site.

The protein belongs to the CTP synthase family. Homotetramer.

It carries out the reaction UTP + L-glutamine + ATP + H2O = CTP + L-glutamate + ADP + phosphate + 2 H(+). The catalysed reaction is L-glutamine + H2O = L-glutamate + NH4(+). The enzyme catalyses UTP + NH4(+) + ATP = CTP + ADP + phosphate + 2 H(+). It participates in pyrimidine metabolism; CTP biosynthesis via de novo pathway; CTP from UDP: step 2/2. Allosterically activated by GTP, when glutamine is the substrate; GTP has no effect on the reaction when ammonia is the substrate. The allosteric effector GTP functions by stabilizing the protein conformation that binds the tetrahedral intermediate(s) formed during glutamine hydrolysis. Inhibited by the product CTP, via allosteric rather than competitive inhibition. In terms of biological role, catalyzes the ATP-dependent amination of UTP to CTP with either L-glutamine or ammonia as the source of nitrogen. Regulates intracellular CTP levels through interactions with the four ribonucleotide triphosphates. The polypeptide is CTP synthase (Alcanivorax borkumensis (strain ATCC 700651 / DSM 11573 / NCIMB 13689 / SK2)).